The chain runs to 364 residues: GMP reductase (364 aa).

Residues 26–27 (SR), lysine 78, 132–134 (DVA), and 183–184 (IG) contribute to the NADP(+) site. K(+) contacts are provided by glycine 184, glycine 186, and cysteine 189. Cysteine 189 serves as the catalytic Thioimidate intermediate. Residue threonine 191 is the Proton donor/acceptor of the active site. Residue arginine 192 coordinates K(+). Residues 222–224 (DGG), 245–246 (GG), 271–273 (GMS), and 289–293 (RASEG) contribute to the GMP site. Residues methionine 272, 288–289 (YR), and 317–320 (SACT) each bind NADP(+).

This sequence belongs to the IMPDH/GMPR family. GuaC type 1 subfamily. Homotetramer.

It catalyses the reaction IMP + NH4(+) + NADP(+) = GMP + NADPH + 2 H(+). Its function is as follows. Catalyzes the irreversible NADPH-dependent deamination of GMP to IMP. It functions in the conversion of nucleobase, nucleoside and nucleotide derivatives of G to A nucleotides, and in maintaining the intracellular balance of A and G nucleotides. This chain is GMP reductase (gmr-1), found in Onchocerca volvulus.